The chain runs to 358 residues: Forkhead box protein I1c (358 aa).

Polar residues predominate over residues 1-13 (MNSIHLPSHQRTS). Disordered regions lie at residues 1-25 (MNSI…PKGA) and 191-255 (DNGN…PSGI). Positions 106-200 (RPPYSYSALI…DNGNFRRKRK (95 aa)) form a DNA-binding region, fork-head.

Its subcellular location is the nucleus. Functionally, probable transcription factor. The chain is Forkhead box protein I1c from Xenopus tropicalis (Western clawed frog).